Here is a 126-residue protein sequence, read N- to C-terminus: Small ribosomal subunit protein eS24 (126 aa).

Residues 98–126 are disordered; the sequence is LYTKPQTSRKQRKEKKNRLKKAGKKTAKK. Positions 104–126 are enriched in basic residues; it reads TSRKQRKEKKNRLKKAGKKTAKK.

It belongs to the eukaryotic ribosomal protein eS24 family.

The polypeptide is Small ribosomal subunit protein eS24 (rps24) (Dictyostelium discoideum (Social amoeba)).